The following is a 119-amino-acid chain: uncharacterized protein (119 aa).

This is an uncharacterized protein from Bacillus subtilis (strain 168).